The following is a 233-amino-acid chain: Large ribosomal subunit protein uL1 (233 aa).

This sequence belongs to the universal ribosomal protein uL1 family. In terms of assembly, part of the 50S ribosomal subunit.

Functionally, binds directly to 23S rRNA. The L1 stalk is quite mobile in the ribosome, and is involved in E site tRNA release. In terms of biological role, protein L1 is also a translational repressor protein, it controls the translation of the L11 operon by binding to its mRNA. The protein is Large ribosomal subunit protein uL1 of Psychrobacter arcticus (strain DSM 17307 / VKM B-2377 / 273-4).